Here is a 63-residue protein sequence, read N- to C-terminus: Translational regulator CsrA (63 aa).

This sequence belongs to the CsrA/RsmA family. As to quaternary structure, homodimer; the beta-strands of each monomer intercalate to form a hydrophobic core, while the alpha-helices form wings that extend away from the core.

Its subcellular location is the cytoplasm. A key translational regulator that binds mRNA to regulate translation initiation and/or mRNA stability. Mediates global changes in gene expression, shifting from rapid growth to stress survival by linking envelope stress, the stringent response and the catabolite repression systems. Usually binds in the 5'-UTR; binding at or near the Shine-Dalgarno sequence prevents ribosome-binding, repressing translation, binding elsewhere in the 5'-UTR can activate translation and/or stabilize the mRNA. Its function is antagonized by small RNA(s). The sequence is that of Translational regulator CsrA from Haemophilus influenzae (strain 86-028NP).